Consider the following 2123-residue polypeptide: Toxin Afp18 (2123 aa).

Residues Phe-864–Ala-919 form a disordered region. Residues Val-1771–Ser-2123 form a tyrosine glycosyltransferase region. UDP-N-acetyl-alpha-D-glucosamine-binding positions include Ile-1850–Val-1852 and Ser-1940–Asp-1941. A divalent metal cation contacts are provided by Asp-1957 and Asp-1959. The short motif at Asp-1957–Asp-1960 is the DxDD motif element. Asn-1993 lines the UDP-N-acetyl-alpha-D-glucosamine pocket.

A divalent metal cation serves as cofactor.

The protein localises to the secreted. It localises to the host cell membrane. It carries out the reaction L-tyrosyl-[protein] + UDP-N-acetyl-alpha-D-glucosamine = O-(N-acetyl-alpha-D-glucosaminyl)-L-tyrosyl-[protein] + UDP + H(+). In terms of biological role, toxin component of the prophage tail-derived protein translocation system Afp, which is the causative agent of enteric redmouth disease in salmonid fish species. Mono-O-GlcNAcylates the small GTPase RhoA in eukaryotic host cells at Tyr-34, using UDP-N-acetylglucosamine (UDP-GlcNAc) as the sugar donor. Glycosylation of RhoA results in impaired effector and regulator interaction and inactivation of downstream RhoA signaling which leads to actin filament depolymerization and blocks cytokinesis and gastrulation during zebrafish embryo development. To a lesser extent, is also able to glycosylate other Rho family GTPases (RhoB, RhoC, Rac1, Rac2, Rac3, and Cdc42) in vitro at a switch I tyrosine residue, but not Ras proteins. In Yersinia ruckeri serotype O1 (strain ATCC 29473 / DSM 18506 / JCM 15110 / CCUG 14190 / NCIMB 2194 / NCTC 12986 / 2396-61), this protein is Toxin Afp18.